The sequence spans 146 residues: Hemoglobin subunit beta (146 aa).

Position 1 is an N-acetylvaline (V1). A Globin domain is found at H2–H146. T12 carries the post-translational modification Phosphothreonine. At K59 the chain carries N6-acetyllysine. Residue H63 participates in heme b binding. Position 82 is an N6-acetyllysine (K82). A heme b-binding site is contributed by H92. C93 is subject to S-nitrosocysteine. N6-acetyllysine is present on K144.

It belongs to the globin family. Heterotetramer of two alpha chains and two beta chains. In terms of tissue distribution, red blood cells.

Its function is as follows. Involved in oxygen transport from the lung to the various peripheral tissues. In Balaenoptera acutorostrata (Common minke whale), this protein is Hemoglobin subunit beta (HBB).